Reading from the N-terminus, the 357-residue chain is Chaperone protein DnaJ (357 aa).

A J domain is found at 4–69; the sequence is DYYAILGVDR…QKRKQYDETG (66 aa). The CR-type zinc-finger motif lies at 132–213; sequence GASKNVKYRR…CHGTGTVSKN (82 aa). The Zn(2+) site is built by Cys145, Cys148, Cys161, Cys164, Cys187, Cys190, Cys201, and Cys204. CXXCXGXG motif repeat units follow at residues 145–152, 161–168, 187–194, and 201–208; these read CEHCSGTG, CPTCHGSG, CRTCHGRG, and CTVCHGTG.

The protein belongs to the DnaJ family. Homodimer. Zn(2+) is required as a cofactor.

The protein localises to the cytoplasm. Participates actively in the response to hyperosmotic and heat shock by preventing the aggregation of stress-denatured proteins and by disaggregating proteins, also in an autonomous, DnaK-independent fashion. Unfolded proteins bind initially to DnaJ; upon interaction with the DnaJ-bound protein, DnaK hydrolyzes its bound ATP, resulting in the formation of a stable complex. GrpE releases ADP from DnaK; ATP binding to DnaK triggers the release of the substrate protein, thus completing the reaction cycle. Several rounds of ATP-dependent interactions between DnaJ, DnaK and GrpE are required for fully efficient folding. Also involved, together with DnaK and GrpE, in the DNA replication of plasmids through activation of initiation proteins. This chain is Chaperone protein DnaJ, found in Picrophilus torridus (strain ATCC 700027 / DSM 9790 / JCM 10055 / NBRC 100828 / KAW 2/3).